A 268-amino-acid chain; its full sequence is Tryptophan synthase alpha chain (268 aa).

Residues glutamate 49 and aspartate 60 each act as proton acceptor in the active site.

This sequence belongs to the TrpA family. Tetramer of two alpha and two beta chains.

The enzyme catalyses (1S,2R)-1-C-(indol-3-yl)glycerol 3-phosphate + L-serine = D-glyceraldehyde 3-phosphate + L-tryptophan + H2O. It participates in amino-acid biosynthesis; L-tryptophan biosynthesis; L-tryptophan from chorismate: step 5/5. The alpha subunit is responsible for the aldol cleavage of indoleglycerol phosphate to indole and glyceraldehyde 3-phosphate. This Vibrio parahaemolyticus serotype O3:K6 (strain RIMD 2210633) protein is Tryptophan synthase alpha chain.